We begin with the raw amino-acid sequence, 697 residues long: Elongation factor G (697 aa).

The region spanning 8-283 is the tr-type G domain; it reads ERMRNIGIAA…AVVDYLPSPL (276 aa). GTP contacts are provided by residues 17 to 24, 81 to 85, and 135 to 138; these read AHIDAGKT, DTPGH, and NKMD.

This sequence belongs to the TRAFAC class translation factor GTPase superfamily. Classic translation factor GTPase family. EF-G/EF-2 subfamily.

The protein resides in the cytoplasm. Its function is as follows. Catalyzes the GTP-dependent ribosomal translocation step during translation elongation. During this step, the ribosome changes from the pre-translocational (PRE) to the post-translocational (POST) state as the newly formed A-site-bound peptidyl-tRNA and P-site-bound deacylated tRNA move to the P and E sites, respectively. Catalyzes the coordinated movement of the two tRNA molecules, the mRNA and conformational changes in the ribosome. The chain is Elongation factor G from Solibacter usitatus (strain Ellin6076).